The sequence spans 359 residues: Spermine synthase (359 aa).

A PABS domain is found at 53–304 (SGWFSEPHPR…GVIGFVLCST (252 aa)). Glutamine 99 provides a ligand contact to S-adenosyl 3-(methylsulfanyl)propylamine. Tyrosine 129 lines the spermidine pocket. Glutamine 130 is an S-adenosyl 3-(methylsulfanyl)propylamine binding site. Aspartate 154 contacts spermidine. S-adenosyl 3-(methylsulfanyl)propylamine is bound by residues glutamate 174 and 205–206 (DA). Aspartate 224 serves as the catalytic Proton acceptor. Tyrosine 292 provides a ligand contact to putrescine.

It belongs to the spermidine/spermine synthase family. As to quaternary structure, heterodimer. Component of a multiprotein complex. Interacts with SPDSYN1 and SPDSYN2. As to expression, expressed predominantly in stem internodes, flower buds and roots.

The enzyme catalyses S-adenosyl 3-(methylsulfanyl)propylamine + spermidine = spermine + S-methyl-5'-thioadenosine + H(+). Its pathway is amine and polyamine biosynthesis; spermine biosynthesis; spermine from spermidine: step 1/1. The chain is Spermine synthase (SPMS) from Arabidopsis thaliana (Mouse-ear cress).